We begin with the raw amino-acid sequence, 263 residues long: 3-methyl-2-oxobutanoate hydroxymethyltransferase (263 aa).

Aspartate 45 and aspartate 84 together coordinate Mg(2+). Residues 45–46, aspartate 84, and lysine 112 each bind 3-methyl-2-oxobutanoate; that span reads DS. Residue glutamate 114 coordinates Mg(2+). The active-site Proton acceptor is the glutamate 180.

It belongs to the PanB family. Homodecamer; pentamer of dimers. Mg(2+) serves as cofactor.

It is found in the cytoplasm. The catalysed reaction is 3-methyl-2-oxobutanoate + (6R)-5,10-methylene-5,6,7,8-tetrahydrofolate + H2O = 2-dehydropantoate + (6S)-5,6,7,8-tetrahydrofolate. Its pathway is cofactor biosynthesis; (R)-pantothenate biosynthesis; (R)-pantoate from 3-methyl-2-oxobutanoate: step 1/2. Catalyzes the reversible reaction in which hydroxymethyl group from 5,10-methylenetetrahydrofolate is transferred onto alpha-ketoisovalerate to form ketopantoate. The sequence is that of 3-methyl-2-oxobutanoate hydroxymethyltransferase from Salmonella paratyphi C (strain RKS4594).